Reading from the N-terminus, the 240-residue chain is Ubiquitin domain-containing protein 1 (240 aa).

The interval 1 to 48 (MGGCVGRPQGESQRSQSRASGQQRKRAGRNEPLKKERPRWKSDYPMTD) is disordered. Positions 12-22 (SQRSQSRASGQ) are enriched in low complexity. Basic and acidic residues predominate over residues 28-42 (GRNEPLKKERPRWKS). A Ubiquitin-like domain is found at 153 to 228 (FQLKVRLSTG…DTSYCKPATR (76 aa)).

In terms of biological role, may be involved in the regulation of cellular senescence through a positive feedback loop with TP53. This chain is Ubiquitin domain-containing protein 1 (ubtd1), found in Xenopus tropicalis (Western clawed frog).